A 565-amino-acid chain; its full sequence is Deoxyribodipyrimidine photo-lyase, mitochondrial (565 aa).

Residues 75-226 enclose the Photolyase/cryptochrome alpha/beta domain; that stretch reads STVMHWFRND…QLKYYHDSCI (152 aa). Residues Y326 and 338-342 contribute to the FAD site; that span reads TSGLS. 2 interaction with DNA regions span residues 384–391 and 451–452; these read EVAWRDFY and NR. An FAD-binding site is contributed by 482–484; that stretch reads DGD. Q514 lines the DNA pocket.

It belongs to the DNA photolyase class-1 family. Monomer. FAD is required as a cofactor. (6R)-5,10-methylene-5,6,7,8-tetrahydrofolate serves as cofactor.

It localises to the nucleus. The protein localises to the mitochondrion. It carries out the reaction cyclobutadipyrimidine (in DNA) = 2 pyrimidine residues (in DNA).. Functionally, involved in repair of UV radiation-induced DNA damage. Catalyzes the light-dependent monomerization (300-600 nm) of cyclobutyl pyrimidine dimers (in cis-syn configuration), which are formed between adjacent bases on the same DNA strand upon exposure to ultraviolet radiation. The protein is Deoxyribodipyrimidine photo-lyase, mitochondrial (PHR1) of Saccharomyces cerevisiae (strain ATCC 204508 / S288c) (Baker's yeast).